A 152-amino-acid chain; its full sequence is Ribosome maturation factor RimP (152 aa).

The protein belongs to the RimP family.

Its subcellular location is the cytoplasm. Functionally, required for maturation of 30S ribosomal subunits. This chain is Ribosome maturation factor RimP, found in Serratia proteamaculans (strain 568).